The primary structure comprises 156 residues: Small ribosomal subunit protein uS7 (156 aa).

Belongs to the universal ribosomal protein uS7 family. As to quaternary structure, part of the 30S ribosomal subunit. Contacts proteins S9 and S11.

In terms of biological role, one of the primary rRNA binding proteins, it binds directly to 16S rRNA where it nucleates assembly of the head domain of the 30S subunit. Is located at the subunit interface close to the decoding center, probably blocks exit of the E-site tRNA. This Streptococcus gordonii (strain Challis / ATCC 35105 / BCRC 15272 / CH1 / DL1 / V288) protein is Small ribosomal subunit protein uS7.